Consider the following 467-residue polypeptide: Methylenetetrahydrofolate--tRNA-(uracil-5-)-methyltransferase TrmFO (467 aa).

An FAD-binding site is contributed by 11–16 (GAGLAG).

The protein belongs to the MnmG family. TrmFO subfamily. Requires FAD as cofactor.

Its subcellular location is the cytoplasm. It carries out the reaction uridine(54) in tRNA + (6R)-5,10-methylene-5,6,7,8-tetrahydrofolate + NADH + H(+) = 5-methyluridine(54) in tRNA + (6S)-5,6,7,8-tetrahydrofolate + NAD(+). The enzyme catalyses uridine(54) in tRNA + (6R)-5,10-methylene-5,6,7,8-tetrahydrofolate + NADPH + H(+) = 5-methyluridine(54) in tRNA + (6S)-5,6,7,8-tetrahydrofolate + NADP(+). Its function is as follows. Catalyzes the folate-dependent formation of 5-methyl-uridine at position 54 (M-5-U54) in all tRNAs. This is Methylenetetrahydrofolate--tRNA-(uracil-5-)-methyltransferase TrmFO from Prochlorococcus marinus (strain NATL2A).